Consider the following 29-residue polypeptide: Cytochrome b6-f complex subunit 8 (29 aa).

A helical transmembrane segment spans residues 3–23; that stretch reads IVSIGWAALMVVFTFSLSLVV.

Belongs to the PetN family. In terms of assembly, the 4 large subunits of the cytochrome b6-f complex are cytochrome b6, subunit IV (17 kDa polypeptide, PetD), cytochrome f and the Rieske protein, while the 4 small subunits are PetG, PetL, PetM and PetN. The complex functions as a dimer.

The protein localises to the plastid. It localises to the chloroplast thylakoid membrane. Component of the cytochrome b6-f complex, which mediates electron transfer between photosystem II (PSII) and photosystem I (PSI), cyclic electron flow around PSI, and state transitions. The protein is Cytochrome b6-f complex subunit 8 of Zygnema circumcarinatum (Green alga).